The sequence spans 113 residues: Large ribosomal subunit protein uL22 (113 aa).

The protein belongs to the universal ribosomal protein uL22 family. As to quaternary structure, part of the 50S ribosomal subunit.

Functionally, this protein binds specifically to 23S rRNA; its binding is stimulated by other ribosomal proteins, e.g. L4, L17, and L20. It is important during the early stages of 50S assembly. It makes multiple contacts with different domains of the 23S rRNA in the assembled 50S subunit and ribosome. Its function is as follows. The globular domain of the protein is located near the polypeptide exit tunnel on the outside of the subunit, while an extended beta-hairpin is found that lines the wall of the exit tunnel in the center of the 70S ribosome. The polypeptide is Large ribosomal subunit protein uL22 (Bacillus subtilis (strain 168)).